A 209-amino-acid polypeptide reads, in one-letter code: Large ribosomal subunit protein uL1 (209 aa).

This sequence belongs to the universal ribosomal protein uL1 family. In terms of assembly, part of the 50S ribosomal subunit.

Binds directly to 23S rRNA. The L1 stalk is quite mobile in the ribosome, and is involved in E site tRNA release. Its function is as follows. Protein L1 is also a translational repressor protein, it controls the translation of the L11 operon by binding to its mRNA. In Neorickettsia sennetsu (strain ATCC VR-367 / Miyayama) (Ehrlichia sennetsu), this protein is Large ribosomal subunit protein uL1 (rplA).